Reading from the N-terminus, the 510-residue chain is MAQPGKLLKEQKYDRQLRLWGDHGQEALESAHVCLINATATGTEILKNLVLPGIGSFTIIDGNQVSGEDAGNNFFLQRSSIGKSPENLLDNDPSFFCRFTVVVATQLPESTLLRLADVLWNSQIPLLICRTYGLVGYMRIIIKEHPVIESHPDNALEDLRLDKPFPELREHFQSYDLDHMEKKDHSHTPWIVIIAKYLAQWYSETNGRIPKTYKEKEDFRDLIRQGILKNENGAPEDEENFEEAIKNVNTALNTTQIPSSIEDIFNDDRCINITKQTPSFWILARALKEFVAKEGQGNLPVRGTIPDMIADSGKYIKLQNVYREKAKKDAAAVGNHVAKLLQSIGQAPESISEKELKLLCSNSAFLRVVRCRSLAEEYGLDTINKDEIISSMDNPDNEIVLYLMLRAVDRFHKQHGRYPGVSNYQVEEDIGKLKSCLTGFLQEYGLSVMVKDDYVHEFCRYGAAEPHTIAAFLGGAAAQEVIKIITKQFVIFNNTYIYSGMSQTSATFQL.

Alanine 2 carries the post-translational modification N-acetylalanine. N6-acetyllysine occurs at positions 6 and 317. The tract at residues 307–320 (DMIADSGKYIKLQN) is interaction with UBA3.

It belongs to the ubiquitin-activating E1 family. ULA1 subfamily. Heterodimer of UBA3 and NAE1. The complex binds NEDD8 and UBE2M. Binds APP and TP53BP2. In terms of processing, ubiquitinated by TRIP12, leading to its degradation by the proteasome.

It is found in the cell membrane. It functions in the pathway protein modification; protein neddylation. Binding of TP53BP2 to the regulatory subunit NAE1 decreases neddylation activity. Regulatory subunit of the dimeric UBA3-NAE1 E1 enzyme. E1 activates NEDD8 by first adenylating its C-terminal glycine residue with ATP, thereafter linking this residue to the side chain of the catalytic cysteine, yielding a NEDD8-UBA3 thioester and free AMP. E1 finally transfers NEDD8 to the catalytic cysteine of UBE2M. Necessary for cell cycle progression through the S-M checkpoint. Overexpression of NAE1 causes apoptosis through deregulation of NEDD8 conjugation. The covalent attachment of NEDD8 to target proteins is known as 'neddylation' and the process is involved in the regulation of cell growth, viability and development. This chain is NEDD8-activating enzyme E1 regulatory subunit (NAE1), found in Macaca fascicularis (Crab-eating macaque).